The primary structure comprises 202 residues: Histone chaperone ASF1B (202 aa).

An interaction with histone H3 and CHAF1B region spans residues 1 to 156 (MAKVSVLNVA…TRFHINWDNN (156 aa)). Ser198 carries the post-translational modification Phosphoserine; by TLK2.

It belongs to the ASF1 family. In terms of assembly, interacts with histone H3 (via C-terminus), including histone H3.1, H3.2 and H3.3, and histone H4; the interaction with H3 is direct. Interacts with the CHAF1A, CHAF1B and RBBP4 subunits of the CAF-1 complex. Interacts with HAT1, NASP and TAF1. Found in a soluble complex with NASP and histones H3 and H4; the interaction with NASP is probably indirect and mediated by H3-H4. Interacts with CDAN1. Found in a cytosolic complex with CDAN1, ASF1A, IPO4 and histones H3.1 and H4. Interacts with CREBBP. Phosphorylated by TLK1 and TLK2.

It localises to the nucleus. The protein resides in the cytoplasm. It is found in the cytosol. Functionally, histone chaperone that facilitates histone deposition and histone exchange and removal during nucleosome assembly and disassembly. Cooperates with chromatin assembly factor 1 (CAF-1) to promote replication-dependent chromatin assembly. Also involved in the nuclear import of the histone H3-H4 dimer together with importin-4 (IPO4): specifically recognizes and binds newly synthesized histones with the monomethylation of H3 'Lys-9' (H3K9me1) and diacetylation at 'Lys-5' and 'Lys-12' of H4 (H4K5ac and H4K12ac) marks in the cytosol. Does not participate in replication-independent nucleosome deposition which is mediated by ASF1A and HIRA. Required for gonad development. The polypeptide is Histone chaperone ASF1B (ASF1B) (Bos taurus (Bovine)).